The sequence spans 316 residues: MAAPEPLRPRLCRLVRGEQGYGFHLHGEKGRRGQFIRRVEPGSPAEAAALRAGDRLVEVNGVNVEGETHHQVVQRIKAVEGETRLLVVDKETDEELRRRQLTCTEDMAQRGLPPAHDPWEPKPDWARAGSLSSDAGQKDVNGPPRELRPRLCHLRKGPQGYGFNLHSDKSRPGQYIRSVDPGSPAAHSGLCAQDRLIEVNGQNVEGLRHAEVVARIKAKEDEARLLLVDPETDEYFKRLRVTPTEEHVEGPLPSPITNGTSPAQDASAWKRDPFQESGLHLSPTAAEAKEKARATRVNKRAPQMDWNRKREIFSNF.

Residues 11–91 (LCRLVRGEQG…ETRLLVVDKE (81 aa)) enclose the PDZ 1 domain. The segment at 109 to 148 (QRGLPPAHDPWEPKPDWARAGSLSSDAGQKDVNGPPRELR) is disordered. Ser-130, Ser-183, and Ser-254 each carry phosphoserine. Positions 151 to 231 (LCHLRKGPQG…EARLLLVDPE (81 aa)) constitute a PDZ 2 domain. A disordered region spans residues 244-303 (TEEHVEGPLPSPITNGTSPAQDASAWKRDPFQESGLHLSPTAAEAKEKARATRVNKRAPQ). Over residues 255–264 (PITNGTSPAQ) the composition is skewed to polar residues. A Phosphoserine modification is found at Ser-282.

As to quaternary structure, homodimer, and heterodimer with NHERF1. Binds ADRB2, SLC9A3, P2RY1, P2YR2, SRY, RDX, PDZK1 and LPAR2. Found in a complex with EZR, PODXL and NHERF2. Interacts (via the PDZ domains) with PODXL (via the C-terminal PDZ-binding motif DTHL); interaction is detected in glomerular epithelium cells. Binds PODXL. Interacts with SGK1 and KCNJ1/ROMK1. Interacts (via the PDZ domains) with SLC26A6. As to expression, detected in kidney glomeruli.

The protein resides in the endomembrane system. Its subcellular location is the nucleus. The protein localises to the apical cell membrane. Scaffold protein that connects plasma membrane proteins with members of the ezrin/moesin/radixin family and thereby helps to link them to the actin cytoskeleton and to regulate their surface expression. Necessary for cAMP-mediated phosphorylation and inhibition of SLC9A3. May also act as scaffold protein in the nucleus. This Oryctolagus cuniculus (Rabbit) protein is Na(+)/H(+) exchange regulatory cofactor NHE-RF2 (NHERF2).